Reading from the N-terminus, the 74-residue chain is U4-theraphotoxin-Cg1a (74 aa).

A signal peptide spans 1–19 (MNATIFALLLLLNLAMYNA). A propeptide spanning residues 20-39 (AEQSSETDMDDTLLIPEINR) is cleaved from the precursor. 3 disulfide bridges follow: cysteine 42-cysteine 56, cysteine 49-cysteine 61, and cysteine 55-cysteine 71.

It belongs to the neurotoxin 36 family. 01 subfamily. In terms of tissue distribution, expressed by the venom gland.

It localises to the secreted. Its function is as follows. Probable ion channel inhibitor. The polypeptide is U4-theraphotoxin-Cg1a (Chilobrachys guangxiensis (Chinese earth tiger tarantula)).